A 101-amino-acid chain; its full sequence is MQPRMLLIVALVALLASARADEGEGSLLLGSMQGYMEQASKTVQDALSSMQESDIAVVASRGWMDNRFKSLKGYWSKFTDKFTGLWESGPEDQLTTPTLEP.

Residues 1-20 form the signal peptide; the sequence is MQPRMLLIVALVALLASARA. M64 carries the post-translational modification Methionine sulfoxide. The segment at 69 to 101 is lipid-binding; it reads KSLKGYWSKFTDKFTGLWESGPEDQLTTPTLEP. Residue T96 is glycosylated (O-linked (GalNAc...) threonine).

This sequence belongs to the apolipoprotein C3 family. The most abundant glycoforms are characterized by an O-linked disaccharide galactose linked to N-acetylgalactosamine (Gal-GalNAc), further modified with up to 3 sialic acid residues. Less abundant glycoforms are characterized by more complex and fucosylated glycan moieties. O-glycosylated on Thr-96 with a core 1 or possibly core 8 glycan. Synthesized predominantly in liver and to a lesser degree in intestine.

It is found in the secreted. Its function is as follows. Component of triglyceride-rich very low density lipoproteins (VLDL) and high density lipoproteins (HDL) in plasma. Plays a multifaceted role in triglyceride homeostasis. Intracellularly, promotes hepatic very low density lipoprotein 1 (VLDL1) assembly and secretion; extracellularly, attenuates hydrolysis and clearance of triglyceride-rich lipoproteins (TRLs). Impairs the lipolysis of TRLs by inhibiting lipoprotein lipase and the hepatic uptake of TRLs by remnant receptors. Formed of several curved helices connected via semiflexible hinges, so that it can wrap tightly around the curved micelle surface and easily adapt to the different diameters of its natural binding partners. The polypeptide is Apolipoprotein C-III (Apoc3) (Rattus norvegicus (Rat)).